We begin with the raw amino-acid sequence, 673 residues long: Glycine--tRNA ligase beta subunit (673 aa).

This sequence belongs to the class-II aminoacyl-tRNA synthetase family. Tetramer of two alpha and two beta subunits.

It is found in the cytoplasm. It catalyses the reaction tRNA(Gly) + glycine + ATP = glycyl-tRNA(Gly) + AMP + diphosphate. The chain is Glycine--tRNA ligase beta subunit from Lactococcus lactis subsp. lactis (strain IL1403) (Streptococcus lactis).